The primary structure comprises 1308 residues: Cadherin-related family member 2 (1308 aa).

The signal sequence occupies residues 1–20; it reads MAWLWLLCALLPAFMVSVTA. At 21 to 1152 the chain is on the extracellular side; it reads NSPPSFGVNM…EPDQQKLLTS (1132 aa). Cadherin domains follow at residues 33 to 124, 125 to 241, 242 to 353, 368 to 480, 481 to 586, 586 to 695, 695 to 807, 809 to 927, and 929 to 1051; these read VTLP…IPVF, LNTE…DPRF, IREF…KPEF, AQVN…RPVF, SQSL…PPVV, VRGS…LPVF, FNQS…PPTL, AASL…APYF, and PNNQ…RLQF. Residues 1153-1173 traverse the membrane as a helical segment; that stretch reads VIIGLVVSLVLVLVILITALV. Residues 1174-1308 are Cytoplasmic-facing; that stretch reads CLRKSYHRKL…TNPGLDTTDL (135 aa). The segment at 1178-1308 is mediates interaction with USH1C and MYO7B and is required for proper localization to microvilli tips and function in microvilli organization; it reads SYHRKLRAMK…TNPGLDTTDL (131 aa). Serine 1245 is subject to Phosphoserine. Residues 1251-1308 are disordered; that stretch reads VDLDMDSKEFKRKDLPGDPPEPDPEPLTAVLSGRSAGASEQQKKNLSFTNPGLDTTDL. Over residues 1255–1266 the composition is skewed to basic and acidic residues; it reads MDSKEFKRKDLP. Residues 1288 to 1308 show a composition bias toward polar residues; the sequence is ASEQQKKNLSFTNPGLDTTDL. Position 1297 is a phosphoserine (serine 1297).

In terms of assembly, part of the IMAC/intermicrovillar adhesion complex/intermicrovillar tip-link complex composed of ANKS4B, MYO7B, USH1C, CDHR2 and CDHR5. Interacts with MAST2. Interacts (via cytoplasmic domain) with USH1C and MYO7B; required for proper localization of CDHR2 to microvilli tips and its function in brush border differentiation.

Its subcellular location is the apical cell membrane. The protein localises to the cell projection. It localises to the microvillus membrane. It is found in the cell junction. Functionally, intermicrovillar adhesion molecule that forms, via its extracellular domain, calcium-dependent heterophilic complexes with CDHR5 on adjacent microvilli. Thereby, controls the packing of microvilli at the apical membrane of epithelial cells. Through its cytoplasmic domain, interacts with microvillus cytoplasmic proteins to form the intermicrovillar adhesion complex/IMAC. This complex plays a central role in microvilli and epithelial brush border differentiation. May also play a role in cell-cell adhesion and contact inhibition in epithelial cells. The sequence is that of Cadherin-related family member 2 from Mus musculus (Mouse).